The chain runs to 55 residues: Large ribosomal subunit protein bL33 (55 aa).

It belongs to the bacterial ribosomal protein bL33 family.

In Deinococcus geothermalis (strain DSM 11300 / CIP 105573 / AG-3a), this protein is Large ribosomal subunit protein bL33.